Reading from the N-terminus, the 385-residue chain is Cytochrome b (385 aa).

A run of 4 helical transmembrane segments spans residues phenylalanine 34–methionine 54, tryptophan 78–isoleucine 99, tryptophan 114–leucine 134, and phenylalanine 179–valine 199. 2 residues coordinate heme b: histidine 84 and histidine 98. Heme b-binding residues include histidine 183 and histidine 197. Residue histidine 202 coordinates a ubiquinone. The next 4 membrane-spanning stretches (helical) occupy residues phenylalanine 227 to leucine 247, leucine 289 to isoleucine 309, leucine 321 to alanine 341, and phenylalanine 348 to proline 368.

This sequence belongs to the cytochrome b family. As to quaternary structure, the cytochrome bc1 complex contains 3 respiratory subunits (MT-CYB, CYC1 and UQCRFS1), 2 core proteins (UQCRC1 and UQCRC2) and probably 6 low-molecular weight proteins. Requires heme b as cofactor.

The protein resides in the mitochondrion inner membrane. Component of the ubiquinol-cytochrome c reductase complex (complex III or cytochrome b-c1 complex) that is part of the mitochondrial respiratory chain. The b-c1 complex mediates electron transfer from ubiquinol to cytochrome c. Contributes to the generation of a proton gradient across the mitochondrial membrane that is then used for ATP synthesis. This Eptatretus burgeri (Inshore hagfish) protein is Cytochrome b (MT-CYB).